The chain runs to 454 residues: NADP-specific glutamate dehydrogenase 1 (454 aa).

The active site involves Lys-110. 174-203 serves as a coordination point for NAD(+); that stretch reads GVLTGKGLNWGGSLIRPEATGYGLVYYTQA.

This sequence belongs to the Glu/Leu/Phe/Val dehydrogenases family. As to quaternary structure, homohexamer.

The enzyme catalyses L-glutamate + NADP(+) + H2O = 2-oxoglutarate + NH4(+) + NADPH + H(+). The chain is NADP-specific glutamate dehydrogenase 1 (GDH1) from Saccharomyces uvarum (strain ATCC 76518 / CBS 7001 / CLIB 283 / NBRC 10550 / MCYC 623 / NCYC 2669 / NRRL Y-11845) (Yeast).